We begin with the raw amino-acid sequence, 95 residues long: NADH-quinone oxidoreductase subunit 11 (95 aa).

3 helical membrane passes run 1–21 (MSYL…VLTR), 25–45 (ILVF…LVGF), and 59–79 (MVIA…VAIF).

The protein belongs to the complex I subunit 4L family. In terms of assembly, NDH-1 is composed of 15 different subunits, Nqo1 to Nqo15. The complex has a L-shaped structure, with the hydrophobic arm (subunits Nqo7, Nqo8 and Nqo10 to Nqo14) embedded in the membrane and the hydrophilic peripheral arm (subunits Nqo1 to Nqo6, Nqo9 and Nqo15) protruding into the bacterial cytoplasm. The hydrophilic domain contains all the redox centers.

The protein resides in the cell inner membrane. The enzyme catalyses a quinone + NADH + 5 H(+)(in) = a quinol + NAD(+) + 4 H(+)(out). Its function is as follows. NDH-1 shuttles electrons from NADH, via FMN and iron-sulfur (Fe-S) centers, to quinones in the respiratory chain. The immediate electron acceptor for the enzyme in this species is menaquinone. Couples the redox reaction to proton translocation (for every two electrons transferred, four hydrogen ions are translocated across the cytoplasmic membrane), and thus conserves the redox energy in a proton gradient required for the synthesis of ATP. In Thermus thermophilus (strain ATCC 27634 / DSM 579 / HB8), this protein is NADH-quinone oxidoreductase subunit 11 (nqo11).